Reading from the N-terminus, the 506-residue chain is Conglutin alpha 1 (506 aa).

The signal sequence occupies residues 1–19; the sequence is MANKLLALSLFLLFSGCFA. Intrachain disulfides connect cysteine 31–cysteine 64 and cysteine 107–cysteine 328. Residues 36-235 form the Cupin type-1 1 domain; that stretch reads LNALEPDNSV…AFSVDREIVR (200 aa). Disordered stretches follow at residues 111–131, 195–216, and 251–322; these read YEEPQEQEQGQGPRPQDRHQK, QQKEGGQGQQQEGGNEGGNVLS, and VKEG…DRNG. Residues 195–207 are compositionally biased toward low complexity; it reads QQKEGGQGQQQEG. Acidic residues predominate over residues 270 to 280; the sequence is EEEEEEEEEEE. Residues 306–315 show a composition bias toward basic residues; sequence QVRRVRRPHH. A Cupin type-1 2 domain is found at 334 to 483; the sequence is HNIGQSTSPD…AFNLDRDQAR (150 aa). 2 N-linked (GlcNAc...) asparagine glycosylation sites follow: asparagine 397 and asparagine 439.

This sequence belongs to the 11S seed storage protein (globulins) family. In terms of assembly, hexamer; each subunit is composed of an acidic and a basic chain derived from a single precursor and linked by a disulfide bond. Component of globulins complexes which accumulate in seeds. As to expression, expressed in developing cotyledons and in the embryonic axis of germinating seeds.

Sulfur-rich seed storage protein. This protein found in the seeds of many leguminous and non-leguminous plants is the source of sulfur-containing amino acids in seed meals. This chain is Conglutin alpha 1, found in Lupinus angustifolius (Narrow-leaved blue lupine).